Reading from the N-terminus, the 431-residue chain is Enolase (431 aa).

Substrate is bound by residues H157 and E166. E209 (proton donor) is an active-site residue. The Mg(2+) site is built by D244, E293, and D318. Substrate is bound by residues E293 and D318. Catalysis depends on K343, which acts as the Proton acceptor. Residues 370 to 373 and K394 contribute to the substrate site; that span reads SHRS.

It belongs to the enolase family. Homodimer. The cofactor is Mg(2+).

The protein localises to the cytoplasm. It catalyses the reaction (2R)-2-phosphoglycerate = phosphoenolpyruvate + H2O. The protein operates within carbohydrate degradation; glycolysis; pyruvate from D-glyceraldehyde 3-phosphate: step 4/5. The sequence is that of Enolase (ENO) from Fasciola hepatica (Liver fluke).